A 299-amino-acid polypeptide reads, in one-letter code: Aspartate carbamoyltransferase catalytic subunit (299 aa).

Residues R54 and T55 each contribute to the carbamoyl phosphate site. Residue K83 participates in L-aspartate binding. Carbamoyl phosphate contacts are provided by R104, H132, and Q135. L-aspartate is bound by residues R165 and R222. Carbamoyl phosphate-binding residues include L261 and P262.

Belongs to the aspartate/ornithine carbamoyltransferase superfamily. ATCase family. In terms of assembly, heterooligomer of catalytic and regulatory chains.

It carries out the reaction carbamoyl phosphate + L-aspartate = N-carbamoyl-L-aspartate + phosphate + H(+). It functions in the pathway pyrimidine metabolism; UMP biosynthesis via de novo pathway; (S)-dihydroorotate from bicarbonate: step 2/3. Catalyzes the condensation of carbamoyl phosphate and aspartate to form carbamoyl aspartate and inorganic phosphate, the committed step in the de novo pyrimidine nucleotide biosynthesis pathway. In Archaeoglobus fulgidus (strain ATCC 49558 / DSM 4304 / JCM 9628 / NBRC 100126 / VC-16), this protein is Aspartate carbamoyltransferase catalytic subunit.